Consider the following 246-residue polypeptide: Pyridoxine 5'-phosphate synthase (246 aa).

The 3-amino-2-oxopropyl phosphate site is built by Asn8 and Arg19. The Proton acceptor role is filled by His44. Positions 46 and 51 each coordinate 1-deoxy-D-xylulose 5-phosphate. Glu76 (proton acceptor) is an active-site residue. Thr106 lines the 1-deoxy-D-xylulose 5-phosphate pocket. His198 serves as the catalytic Proton donor. 3-amino-2-oxopropyl phosphate contacts are provided by residues Asp199 and 221 to 222 (GH).

Belongs to the PNP synthase family. Homooctamer; tetramer of dimers.

It is found in the cytoplasm. The catalysed reaction is 3-amino-2-oxopropyl phosphate + 1-deoxy-D-xylulose 5-phosphate = pyridoxine 5'-phosphate + phosphate + 2 H2O + H(+). The protein operates within cofactor biosynthesis; pyridoxine 5'-phosphate biosynthesis; pyridoxine 5'-phosphate from D-erythrose 4-phosphate: step 5/5. In terms of biological role, catalyzes the complicated ring closure reaction between the two acyclic compounds 1-deoxy-D-xylulose-5-phosphate (DXP) and 3-amino-2-oxopropyl phosphate (1-amino-acetone-3-phosphate or AAP) to form pyridoxine 5'-phosphate (PNP) and inorganic phosphate. The polypeptide is Pyridoxine 5'-phosphate synthase (Brucella abortus (strain S19)).